The primary structure comprises 619 residues: Threonine--tRNA ligase (619 aa).

Residues Met1 to Glu143 are editing domain. The interval Pro201–Pro500 is catalytic. Cys293, His345, and His469 together coordinate Zn(2+).

It belongs to the class-II aminoacyl-tRNA synthetase family. Homodimer. It depends on Zn(2+) as a cofactor.

It is found in the cytoplasm. It carries out the reaction tRNA(Thr) + L-threonine + ATP = L-threonyl-tRNA(Thr) + AMP + diphosphate + H(+). Its function is as follows. Catalyzes the attachment of threonine to tRNA(Thr) in a two-step reaction: L-threonine is first activated by ATP to form Thr-AMP and then transferred to the acceptor end of tRNA(Thr). Also edits incorrectly charged L-seryl-tRNA(Thr). This is Threonine--tRNA ligase from Methanothrix thermoacetophila (strain DSM 6194 / JCM 14653 / NBRC 101360 / PT) (Methanosaeta thermophila).